The following is a 121-amino-acid chain: Large ribosomal subunit protein uL18 (121 aa).

Belongs to the universal ribosomal protein uL18 family. In terms of assembly, part of the 50S ribosomal subunit; part of the 5S rRNA/L5/L18/L25 subcomplex. Contacts the 5S and 23S rRNAs.

This is one of the proteins that bind and probably mediate the attachment of the 5S RNA into the large ribosomal subunit, where it forms part of the central protuberance. The sequence is that of Large ribosomal subunit protein uL18 from Anaplasma phagocytophilum (strain HZ).